The following is a 216-amino-acid chain: Holliday junction branch migration complex subunit RuvA (216 aa).

A domain I region spans residues 1–64; the sequence is MISFIKGVLI…EDAQQLYGFK (64 aa). Positions 65–143 are domain II; it reads SKVDKKVFQE…KMANEIYAQT (79 aa). Residues 144 to 163 are flexible linker; the sequence is SGTTTTSQDSQAQQAPTSVV. Positions 164–216 are domain III; it reads LANSIFNESVDALLALGYKQKDAEKMARSAMGDATTAAEVIRKALQGSIKSKR.

Belongs to the RuvA family. In terms of assembly, homotetramer. Forms an RuvA(8)-RuvB(12)-Holliday junction (HJ) complex. HJ DNA is sandwiched between 2 RuvA tetramers; dsDNA enters through RuvA and exits via RuvB. An RuvB hexamer assembles on each DNA strand where it exits the tetramer. Each RuvB hexamer is contacted by two RuvA subunits (via domain III) on 2 adjacent RuvB subunits; this complex drives branch migration. In the full resolvosome a probable DNA-RuvA(4)-RuvB(12)-RuvC(2) complex forms which resolves the HJ.

Its subcellular location is the cytoplasm. Its function is as follows. The RuvA-RuvB-RuvC complex processes Holliday junction (HJ) DNA during genetic recombination and DNA repair, while the RuvA-RuvB complex plays an important role in the rescue of blocked DNA replication forks via replication fork reversal (RFR). RuvA specifically binds to HJ cruciform DNA, conferring on it an open structure. The RuvB hexamer acts as an ATP-dependent pump, pulling dsDNA into and through the RuvAB complex. HJ branch migration allows RuvC to scan DNA until it finds its consensus sequence, where it cleaves and resolves the cruciform DNA. This is Holliday junction branch migration complex subunit RuvA from Francisella tularensis subsp. mediasiatica (strain FSC147).